Consider the following 270-residue polypeptide: DNA repair protein RecO (270 aa).

This sequence belongs to the RecO family.

In terms of biological role, involved in DNA repair and RecF pathway recombination. The sequence is that of DNA repair protein RecO from Synechococcus sp. (strain WH7803).